Consider the following 1009-residue polypeptide: Chitin synthase 2 (1009 aa).

Composition is skewed to polar residues over residues 1-12 and 34-62; these read MSYNNPNNSNSH and EFLNQRSNTPLTQGTYNYHNTSTNSLNFQ. Disordered stretches follow at residues 1-62 and 175-234; these read MSYN…LNFQ and DESQ…EVRS. Positions 192–202 are enriched in acidic residues; the sequence is EGEEEEEEGET. The next 7 helical transmembrane spans lie at 647–667, 682–702, 722–742, 757–777, 804–823, 930–950, and 967–987; these read WLNGSFFAAIYSLVHFYKVWT, FFYQLINLIVSWFSIGSYFLV, ILSVIFLWLYLASIVTTFVLS, IVIFFAILMAYMIFAAIFMAV, LVVATSSTYALYFLASFLYF, VLVWMFTNFVVIALVLETGGF, and AAVFLTVILWTVAFMALFRFI.

It belongs to the chitin synthase family.

The protein resides in the cell membrane. The catalysed reaction is [(1-&gt;4)-N-acetyl-beta-D-glucosaminyl](n) + UDP-N-acetyl-alpha-D-glucosamine = [(1-&gt;4)-N-acetyl-beta-D-glucosaminyl](n+1) + UDP + H(+). Its function is as follows. Polymerizes chitin, a structural polymer of the cell wall and septum, by transferring the sugar moiety of UDP-GlcNAc to the non-reducing end of the growing chitin polymer. In Candida albicans (Yeast), this protein is Chitin synthase 2 (CHS2).